Consider the following 326-residue polypeptide: Beta-ketoacyl-[acyl-carrier-protein] synthase III (326 aa).

Residues C116 and H253 contribute to the active site. The segment at 254 to 258 is ACP-binding; it reads QANIR. The active site involves N283.

The protein belongs to the thiolase-like superfamily. FabH family. In terms of assembly, homodimer.

It is found in the cytoplasm. The catalysed reaction is malonyl-[ACP] + acetyl-CoA + H(+) = 3-oxobutanoyl-[ACP] + CO2 + CoA. It functions in the pathway lipid metabolism; fatty acid biosynthesis. Its function is as follows. Catalyzes the condensation reaction of fatty acid synthesis by the addition to an acyl acceptor of two carbons from malonyl-ACP. Catalyzes the first condensation reaction which initiates fatty acid synthesis and may therefore play a role in governing the total rate of fatty acid production. Possesses both acetoacetyl-ACP synthase and acetyl transacylase activities. Its substrate specificity determines the biosynthesis of branched-chain and/or straight-chain of fatty acids. This Jannaschia sp. (strain CCS1) protein is Beta-ketoacyl-[acyl-carrier-protein] synthase III.